We begin with the raw amino-acid sequence, 211 residues long: Arginine exporter protein ArgO (211 aa).

6 consecutive transmembrane segments (helical) span residues 1–21, 37–57, 68–88, 111–131, 147–167, and 179–199; these read MISYYFQGVALGAAMILPLGP, LMIALLCALSDLVLISAGIFG, LLALVTWGGVAFLLWYGFGAL, IIATMLAVTWLNPHVYLDTFV, WFALGTISASFLWFFGLALLA, and AQRIINILVGVVMWLIAFQLA.

Belongs to the LysE/ArgO transporter (TC 2.A.75) family.

Its subcellular location is the cell inner membrane. The catalysed reaction is L-arginine(in) = L-arginine(out). Its function is as follows. Involved in the export of arginine. Important to control the intracellular level of arginine and the correct balance between arginine and lysine. This chain is Arginine exporter protein ArgO, found in Salmonella paratyphi B (strain ATCC BAA-1250 / SPB7).